Here is a 335-residue protein sequence, read N- to C-terminus: Glycerol-3-phosphate dehydrogenase [NAD(P)+] (335 aa).

Residues S10, F11, R31, and K105 each coordinate NADPH. K105, G136, and S138 together coordinate sn-glycerol 3-phosphate. A140 contacts NADPH. Sn-glycerol 3-phosphate contacts are provided by K191, D244, S254, R255, and N256. Catalysis depends on K191, which acts as the Proton acceptor. NADPH is bound at residue R255. Residues V279 and E281 each contribute to the NADPH site.

This sequence belongs to the NAD-dependent glycerol-3-phosphate dehydrogenase family.

It localises to the cytoplasm. It catalyses the reaction sn-glycerol 3-phosphate + NAD(+) = dihydroxyacetone phosphate + NADH + H(+). It carries out the reaction sn-glycerol 3-phosphate + NADP(+) = dihydroxyacetone phosphate + NADPH + H(+). Its pathway is membrane lipid metabolism; glycerophospholipid metabolism. Functionally, catalyzes the reduction of the glycolytic intermediate dihydroxyacetone phosphate (DHAP) to sn-glycerol 3-phosphate (G3P), the key precursor for phospholipid synthesis. The sequence is that of Glycerol-3-phosphate dehydrogenase [NAD(P)+] from Leptospira interrogans serogroup Icterohaemorrhagiae serovar copenhageni (strain Fiocruz L1-130).